The primary structure comprises 248 residues: Large ribosomal subunit protein uL4 (248 aa).

Positions 69–92 (HVPRLKNGSRAAKVPQAKGGREAH) are disordered.

It belongs to the universal ribosomal protein uL4 family. Part of the 50S ribosomal subunit.

One of the primary rRNA binding proteins, this protein initially binds near the 5'-end of the 23S rRNA. It is important during the early stages of 50S assembly. It makes multiple contacts with different domains of the 23S rRNA in the assembled 50S subunit and ribosome. Functionally, forms part of the polypeptide exit tunnel. This is Large ribosomal subunit protein uL4 from Methanoregula boonei (strain DSM 21154 / JCM 14090 / 6A8).